The chain runs to 46 residues: MISMLRCISLFLSVILITGYFVTPVMSCNCKAPETALCARRCQQHG.

The signal sequence occupies residues 1-27 (MISMLRCISLFLSVILITGYFVTPVMS). 2 disulfides stabilise this stretch: Cys-28-Cys-38 and Cys-30-Cys-42. Residues 40–41 (RR) are essential for toxin activity. At His-45 the chain carries Histidine amide.

In terms of tissue distribution, expressed by the venom gland.

It localises to the secreted. Neurotoxin that blocks voltage-independent calcium-activated potassium channels (KCNN1=SK1, KCNN2=SK2, KCNN3=SK3). The chain is Apamin from Apis cerana cerana (Oriental honeybee).